The chain runs to 637 residues: Probable polypeptide N-acetylgalactosaminyltransferase 8 (637 aa).

The Cytoplasmic portion of the chain corresponds to 1–6; that stretch reads MMFWRK. The helical; Signal-anchor for type II membrane protein transmembrane segment at 7 to 29 threads the bilayer; it reads LPKALFIGLTLAIAVNLLLVFSS. Residues 30–637 are Lumenal-facing; sequence KGTLQNLFTG…VRDWGQTNSQ (608 aa). 3 N-linked (GlcNAc...) asparagine glycosylation sites follow: N85, N107, and N160. 5 disulfide bridges follow: C171–C404, C395–C474, C509–C525, C556–C571, and C599–C617. Positions 180–294 are catalytic subdomain A; the sequence is LPSLSVILIF…VGWAEPILAR (115 aa). Substrate-binding residues include D221 and R255. Positions 278, 280, and 409 each coordinate Mn(2+). The tract at residues 351 to 412 is catalytic subdomain B; sequence PVKSPSIMGI…PCSRIAHLER (62 aa). Substrate is bound by residues R412 and Y417. The Ricin B-type lectin domain maps to 496–634; that stretch reads GYGRMKNLLD…QHTVRDWGQT (139 aa).

Belongs to the glycosyltransferase 2 family. GalNAc-T subfamily. Mn(2+) is required as a cofactor. Widely expressed. Expressed in heart, skeletal muscle, kidney, liver, small intestine and placenta. Weakly expressed in colon, thymus, spleen, lung and leukocyte.

It is found in the golgi apparatus membrane. It catalyses the reaction L-seryl-[protein] + UDP-N-acetyl-alpha-D-galactosamine = a 3-O-[N-acetyl-alpha-D-galactosaminyl]-L-seryl-[protein] + UDP + H(+). The catalysed reaction is L-threonyl-[protein] + UDP-N-acetyl-alpha-D-galactosamine = a 3-O-[N-acetyl-alpha-D-galactosaminyl]-L-threonyl-[protein] + UDP + H(+). It participates in protein modification; protein glycosylation. Functionally, probably catalyzes the initial reaction in O-linked oligosaccharide biosynthesis, the transfer of an N-acetyl-D-galactosamine residue to a serine or threonine residue on the protein receptor. The polypeptide is Probable polypeptide N-acetylgalactosaminyltransferase 8 (GALNT8) (Homo sapiens (Human)).